Here is a 121-residue protein sequence, read N- to C-terminus: Large ribosomal subunit protein bL19 (121 aa).

Belongs to the bacterial ribosomal protein bL19 family.

Functionally, this protein is located at the 30S-50S ribosomal subunit interface and may play a role in the structure and function of the aminoacyl-tRNA binding site. This chain is Large ribosomal subunit protein bL19, found in Neisseria gonorrhoeae (strain ATCC 700825 / FA 1090).